The chain runs to 710 residues: MVMACRVVNKRRHMGLQQLSSFAETGRTFLGPLKSSKFIIDEECHESVLISSTVRLLESLDLTSAVGQLLNEAVQAQNNTYRTGISTLLFLVGAWSSAVEECLHLGVPISIIVSVMSEGLNFCSEEVVSLHVPVHNIFDCMDSTKTFSQLETFSVSLCPFLQVPSDTDLIEELHGLKDVASQTLTISNLSGRPLKSYELFKPQTKVEADNNTSRTLKNSLLADTCCRQSILIHSRHFNRTDNTEGVSKPDGFQEHVTATHKTYRCNDLVELAVGLSHGDHSSMKLVEEAVQLQYQNACVQQGNCTKPFMFDISRIFTCCLPGLPETSSCVCPGYITVVSVSNNPVIKELQNQPVRIVLIEGDLTENYRHLGFNKSANIKTVLDSMRLQEDSSEELWANHVLQVLIQFKVNLVLVQGNVSERLIEKCINSKRLVIGSVNGSVMQAFAEAAGAVQVAYITQVNEDCVGDGVCVTFWRSSPLDVVDRNNRIAILLKTEGINLVTAVLTNPVTAQMQIKEDRFWTCAYRLYYALKEEKVFLGGGAVEFLCLSCLHILAEQSLKKENHACSGWLHNTSSWLASSLAIYRPTVLKFLANGWQKYLSTLLYNTANYSSEFEASTYIQHHLQNATDSGSPSSYILNEYSKLNSRIFNSDISNKLEQIPRVYDVVTPKIEAWRRALDLVLLVLQTDSEIITGHGHTQINSQELTGFLFL.

This sequence belongs to the TCP-1 chaperonin family. BBS12 subfamily. Component of the chaperonin-containing T-complex (TRiC), a heterooligomeric complex of about 850 to 900 kDa that forms two stacked rings, 12 to 16 nm in diameter. Interacts with MKKS.

The protein resides in the cell projection. The protein localises to the cilium. Functionally, component of the chaperonin-containing T-complex (TRiC), a molecular chaperone complex that assists the folding of proteins upon ATP hydrolysis. As part of the TRiC complex may play a role in the assembly of BBSome, a complex involved in ciliogenesis regulating transports vesicles to the cilia. Involved in adipogenic differentiation. This is Chaperonin-containing T-complex member BBS12 (BBS12) from Homo sapiens (Human).